A 152-amino-acid polypeptide reads, in one-letter code: MDLSTLEQKLTEMISAPVAALGYELVGIEFIRSRQSTLRIYIDSEDGITVDDCADVSHQVSAVLDVEDPITVAYNLEVSSPGLERPLFTAAHYLHFVGEEVAVVLRMAVQNRRKWLGVIKAVDGEMITITVEGKDEVFALSNIQKANLVPHF.

This sequence belongs to the RimP family.

It is found in the cytoplasm. Functionally, required for maturation of 30S ribosomal subunits. This chain is Ribosome maturation factor RimP, found in Pectobacterium atrosepticum (strain SCRI 1043 / ATCC BAA-672) (Erwinia carotovora subsp. atroseptica).